We begin with the raw amino-acid sequence, 161 residues long: Cyclic pyranopterin monophosphate synthase (161 aa).

Residues 75–77 and 113–114 each bind substrate; these read LCH and ME. The active site involves aspartate 128.

It belongs to the MoaC family. As to quaternary structure, homohexamer; trimer of dimers.

It catalyses the reaction (8S)-3',8-cyclo-7,8-dihydroguanosine 5'-triphosphate = cyclic pyranopterin phosphate + diphosphate. Its pathway is cofactor biosynthesis; molybdopterin biosynthesis. In terms of biological role, catalyzes the conversion of (8S)-3',8-cyclo-7,8-dihydroguanosine 5'-triphosphate to cyclic pyranopterin monophosphate (cPMP). In Thioalkalivibrio sulfidiphilus (strain HL-EbGR7), this protein is Cyclic pyranopterin monophosphate synthase.